Reading from the N-terminus, the 503-residue chain is Cytochrome P450 11B2, mitochondrial (503 aa).

A mitochondrion-targeting transit peptide spans 1 to 24 (MALRAKAEVCVAAPWLSLQRARAL). F381 provides a ligand contact to 21-hydroxyprogesterone. C450 is a heme binding site.

It belongs to the cytochrome P450 family. Heme serves as cofactor. Expressed sporadically in the zona glomerulosa (zG) of the adrenal cortex (conventional zonation), as well as in aldosterone-producing cell clusters (APCCs) composed of morphological zG cells in contact with the capsule (variegated zonation).

The protein localises to the mitochondrion inner membrane. The catalysed reaction is a steroid + 2 reduced [adrenodoxin] + O2 + 2 H(+) = an 11beta-hydroxysteroid + 2 oxidized [adrenodoxin] + H2O. The enzyme catalyses 21-hydroxyprogesterone + 2 reduced [adrenodoxin] + O2 + 2 H(+) = corticosterone + 2 oxidized [adrenodoxin] + H2O. It carries out the reaction corticosterone + 2 reduced [adrenodoxin] + O2 + 2 H(+) = 18-hydroxycorticosterone + 2 oxidized [adrenodoxin] + H2O. It catalyses the reaction 18-hydroxycorticosterone + 2 reduced [adrenodoxin] + O2 + 2 H(+) = aldosterone + 2 oxidized [adrenodoxin] + 2 H2O. The catalysed reaction is 11-deoxycortisol + 2 reduced [adrenodoxin] + O2 + 2 H(+) = cortisol + 2 oxidized [adrenodoxin] + H2O. The enzyme catalyses 21-hydroxyprogesterone + 2 reduced [adrenodoxin] + O2 + 2 H(+) = 18-hydroxy-11-deoxycorticosterone + 2 oxidized [adrenodoxin] + H2O. It carries out the reaction cortisol + 2 reduced [adrenodoxin] + O2 + 2 H(+) = 18-hydroxycortisol + 2 oxidized [adrenodoxin] + H2O. It catalyses the reaction 18-hydroxycortisol + 2 reduced [adrenodoxin] + O2 + 2 H(+) = 18-oxocortisol + 2 oxidized [adrenodoxin] + 2 H2O. Its pathway is steroid biosynthesis. Its function is as follows. A cytochrome P450 monooxygenase that catalyzes the biosynthesis of aldosterone, the main mineralocorticoid in the human body responsible for salt and water homeostasis, thus involved in blood pressure regulation, arterial hypertension, and the development of heart failure. Catalyzes three sequential oxidative reactions of 11-deoxycorticosterone (21-hydroxyprogesterone), namely 11-beta hydroxylation, followed by two successive oxidations at C18 yielding 18-hydroxy and then 18-oxo intermediates (that would not leave the enzyme active site during the consecutive hydroxylation reactions), ending with the formation of aldosterone. Can also produce 18-hydroxycortisol and 18-oxocortisol, derived from successive oxidations of cortisol at C18, normally found at very low levels, but significantly increased in primary aldosteronism, the most common form of secondary hypertension. Mechanistically, uses molecular oxygen inserting one oxygen atom into a substrate and reducing the second into a water molecule. Two electrons are provided by NADPH via a two-protein mitochondrial transfer system comprising flavoprotein FDXR (adrenodoxin/ferredoxin reductase) and nonheme iron-sulfur protein FDX1 or FDX2 (adrenodoxin/ferredoxin). Could also be involved in the androgen metabolic pathway. This chain is Cytochrome P450 11B2, mitochondrial, found in Homo sapiens (Human).